We begin with the raw amino-acid sequence, 63 residues long: MARRCEICNKGVVAGVQYSHSHRQSKRTWAPNIKKVKAIVKGTPKTVHVCTRCLRSGKVQRAI.

Belongs to the bacterial ribosomal protein bL28 family.

The polypeptide is Large ribosomal subunit protein bL28 (Clostridium perfringens (strain ATCC 13124 / DSM 756 / JCM 1290 / NCIMB 6125 / NCTC 8237 / Type A)).